Here is a 339-residue protein sequence, read N- to C-terminus: Putative zinc metalloprotease FN1322 (339 aa).

His17 lines the Zn(2+) pocket. Residue Glu18 is part of the active site. His21 contributes to the Zn(2+) binding site. 3 consecutive transmembrane segments (helical) span residues 88–110 (FIVL…FVTA), 262–284 (FGWI…LNLL), and 318–335 (GMIL…NDVW). In terms of domain architecture, PDZ spans 96 to 179 (FMNFLMAFIL…ITALVERNGK (84 aa)).

This sequence belongs to the peptidase M50B family. Zn(2+) serves as cofactor.

It localises to the cell membrane. The polypeptide is Putative zinc metalloprotease FN1322 (Fusobacterium nucleatum subsp. nucleatum (strain ATCC 25586 / DSM 15643 / BCRC 10681 / CIP 101130 / JCM 8532 / KCTC 2640 / LMG 13131 / VPI 4355)).